The following is a 193-amino-acid chain: MKPLVVFVLGGPGAGKGTQCERIVQKYGYTHLSAGDLLRDERKKPDSQYGELIESYIRDGKIVPVEITISLLQRAMERTMAFDANKHKFLIDGFPRNEDNLQGWERTMNGKADVSFVLFFDCDNETCIERCLERGKSSGRSDDNRESLEKRIQTYLQSTRPIIDLYEKRGKVRKVDASKSVDEVFTKVQNIFD.

13–18 (GAGKGT) is an ATP binding site. The tract at residues 33–63 (SAGDLLRDERKKPDSQYGELIESYIRDGKIV) is NMP. A ribonucleoside 5'-phosphate contacts are provided by residues R39, 61-63 (KIV), and 93-96 (GFPR). Position 100 (N100) interacts with CMP. The LID stretch occupies residues 133–143 (ERGKSSGRSDD). Residue R134 participates in ATP binding. A ribonucleoside 5'-phosphate contacts are provided by R140 and R151. Position 179 (K179) interacts with ATP.

It belongs to the adenylate kinase family. UMP-CMP kinase subfamily. As to quaternary structure, monomer. Requires Mg(2+) as cofactor.

The protein resides in the nucleus. The protein localises to the cytoplasm. The enzyme catalyses CMP + ATP = CDP + ADP. It carries out the reaction dCMP + ATP = dCDP + ADP. The catalysed reaction is UMP + ATP = UDP + ADP. It catalyses the reaction a 2'-deoxyribonucleoside 5'-diphosphate + ATP = a 2'-deoxyribonucleoside 5'-triphosphate + ADP. The enzyme catalyses a ribonucleoside 5'-diphosphate + ATP = a ribonucleoside 5'-triphosphate + ADP. In terms of biological role, catalyzes the phosphorylation of pyrimidine nucleoside monophosphates at the expense of ATP. Plays an important role in de novo pyrimidine nucleotide biosynthesis. Has preference for UMP and CMP as phosphate acceptors. Also displays broad nucleoside diphosphate kinase activity. The chain is UMP-CMP kinase (cmpk1) from Xenopus laevis (African clawed frog).